Reading from the N-terminus, the 379-residue chain is MKIATLAVVSAFAATAIAGPIRPDGVVNDKFLIELGPGETQWVTKQQKHEMRAHINSIYKAGQGFVDITDEFGTDFTTAEVVPANYPKSALHAAVVNPMIAGLSKENLMRDLNTLVKFNNRYYESPTGVESATWVFNEVQKIIQASGVKGAKVEKFTNKFKQFSVIATIPGASKNTVIVGAHQDSINLKDPMKGRAPGADDNGSGSVVVLEAFRNVLKSKAIQAANATNTLEFHWYAGEEGGLLGSNNIFKKYKADGRKVKAMLNQDLTGFTKKGNPEQFGLITDNTNAELNEFCKTIVEKYATIKIIEAKCGYACSDHASAHRNGFPSSFIAETNFRNTNPYLHTADDVIANLDFNHMLEHAKVVVGFMGELAMTPNL.

The signal sequence occupies residues 1–18; the sequence is MKIATLAVVSAFAATAIA. Zn(2+) contacts are provided by H182 and D201. N-linked (GlcNAc...) asparagine glycosylation is found at N202 and N226. E240 and D267 together coordinate Zn(2+). A disulfide bridge links C312 with C316. A Zn(2+)-binding site is contributed by H345.

This sequence belongs to the peptidase M28 family. M28E subfamily. Monomer. Zn(2+) is required as a cofactor.

The protein localises to the secreted. Its function is as follows. Probable extracellular aminopeptidase which contributes to pathogenicity. This chain is Probable leucine aminopeptidase ARB_01443, found in Arthroderma benhamiae (strain ATCC MYA-4681 / CBS 112371) (Trichophyton mentagrophytes).